Consider the following 589-residue polypeptide: NADP-dependent malic enzyme (589 aa).

Tyr137 serves as the catalytic Proton donor. Arg190 provides a ligand contact to NAD(+). Lys208 (proton acceptor) is an active-site residue. A divalent metal cation-binding residues include Glu280, Asp281, and Asp304. Asp304 serves as a coordination point for NAD(+). 333–349 (LFLGAGEAGTGIAELIA) is an NADP(+) binding site. Asn445 lines the NAD(+) pocket.

The protein belongs to the malic enzymes family. Homotetramer. Mg(2+) is required as a cofactor. Mn(2+) serves as cofactor.

The protein resides in the cytoplasm. The enzyme catalyses (S)-malate + NADP(+) = pyruvate + CO2 + NADPH. The catalysed reaction is oxaloacetate + H(+) = pyruvate + CO2. This is NADP-dependent malic enzyme (ME1) from Phaseolus vulgaris (Kidney bean).